We begin with the raw amino-acid sequence, 416 residues long: UDP-N-acetylmuramoylalanine--D-glutamate ligase (416 aa).

Residue 108-114 (GTTGKTT) coordinates ATP.

The protein belongs to the MurCDEF family.

The protein localises to the cytoplasm. It carries out the reaction UDP-N-acetyl-alpha-D-muramoyl-L-alanine + D-glutamate + ATP = UDP-N-acetyl-alpha-D-muramoyl-L-alanyl-D-glutamate + ADP + phosphate + H(+). It functions in the pathway cell wall biogenesis; peptidoglycan biosynthesis. In terms of biological role, cell wall formation. Catalyzes the addition of glutamate to the nucleotide precursor UDP-N-acetylmuramoyl-L-alanine (UMA). This chain is UDP-N-acetylmuramoylalanine--D-glutamate ligase, found in Chlamydia trachomatis serovar A (strain ATCC VR-571B / DSM 19440 / HAR-13).